The sequence spans 360 residues: Phospho-N-acetylmuramoyl-pentapeptide-transferase (360 aa).

A run of 10 helical transmembrane segments spans residues 25–45, 73–93, 97–117, 132–152, 167–187, 199–219, 236–256, 263–283, 288–308, and 338–358; these read RGILGVLTALILALCLGPWMI, TMGGALILSAIAISTLLWADL, YVWTVLAVTLLFGAIGWVDDY, WKYFWQSVFGLGAALFLYMTA, TIEIPLGAAFIVLTYFVIVGS, GLAIMPTVMVGGALGIFCYLS, AGELIVFCGALIGAGLGFLWF, VFMGDVGALALGAALGTIAVI, VVLFIMGGVFVMETLSVMIQV, and VIVRFWIITVVLVLIGLATLK.

Belongs to the glycosyltransferase 4 family. MraY subfamily. The cofactor is Mg(2+).

It localises to the cell inner membrane. The enzyme catalyses UDP-N-acetyl-alpha-D-muramoyl-L-alanyl-gamma-D-glutamyl-meso-2,6-diaminopimeloyl-D-alanyl-D-alanine + di-trans,octa-cis-undecaprenyl phosphate = di-trans,octa-cis-undecaprenyl diphospho-N-acetyl-alpha-D-muramoyl-L-alanyl-D-glutamyl-meso-2,6-diaminopimeloyl-D-alanyl-D-alanine + UMP. Its pathway is cell wall biogenesis; peptidoglycan biosynthesis. Its function is as follows. Catalyzes the initial step of the lipid cycle reactions in the biosynthesis of the cell wall peptidoglycan: transfers peptidoglycan precursor phospho-MurNAc-pentapeptide from UDP-MurNAc-pentapeptide onto the lipid carrier undecaprenyl phosphate, yielding undecaprenyl-pyrophosphoryl-MurNAc-pentapeptide, known as lipid I. The polypeptide is Phospho-N-acetylmuramoyl-pentapeptide-transferase (Azotobacter vinelandii (strain DJ / ATCC BAA-1303)).